The primary structure comprises 109 residues: Ferredoxin (109 aa).

4Fe-4S ferredoxin-type domains are found at residues 2–30 (TYVV…YEGE) and 31–60 (FMLV…PESP). The [3Fe-4S] cluster site is built by Cys-9 and Cys-17. The [4Fe-4S] cluster site is built by Cys-21, Cys-40, Cys-43, and Cys-46. Cys-50 lines the [3Fe-4S] cluster pocket.

It depends on [4Fe-4S] cluster as a cofactor. Requires [3Fe-4S] cluster as cofactor.

In terms of biological role, ferredoxins are iron-sulfur proteins that transfer electrons in a wide variety of metabolic reactions. The sequence is that of Ferredoxin (fdxA) from Rickettsia prowazekii (strain Madrid E).